We begin with the raw amino-acid sequence, 295 residues long: Glycine--tRNA ligase alpha subunit (295 aa).

This sequence belongs to the class-II aminoacyl-tRNA synthetase family. Tetramer of two alpha and two beta subunits.

The protein localises to the cytoplasm. The catalysed reaction is tRNA(Gly) + glycine + ATP = glycyl-tRNA(Gly) + AMP + diphosphate. The sequence is that of Glycine--tRNA ligase alpha subunit from Bacillus licheniformis (strain ATCC 14580 / DSM 13 / JCM 2505 / CCUG 7422 / NBRC 12200 / NCIMB 9375 / NCTC 10341 / NRRL NRS-1264 / Gibson 46).